A 169-amino-acid polypeptide reads, in one-letter code: Small ribosomal subunit protein bS16 (169 aa).

A disordered region spans residues 114-169; sequence AEGPTAEAITEKRRKAKEEAEAKAAAEAEAAEKAEAEAAEKAAAEAAEESEEASAE. Positions 129 to 156 are enriched in basic and acidic residues; sequence AKEEAEAKAAAEAEAAEKAEAEAAEKAA. Residues 159–169 are compositionally biased toward acidic residues; sequence AAEESEEASAE.

Belongs to the bacterial ribosomal protein bS16 family.

The polypeptide is Small ribosomal subunit protein bS16 (Corynebacterium urealyticum (strain ATCC 43042 / DSM 7109)).